We begin with the raw amino-acid sequence, 599 residues long: MKIENIRNFSIIAHIDHGKSTLADRLLEYTGALSERERQDQFLDKMDLERERGITIKAQTVRLNYRADDGKDYVLNLIDTPGHVDFTYEVSRSLAACEGGLLVVDASQGVEAQTLANVYLAIDNNLEVFPVLNKIDLPAAEPERVKHEIEEIIGLDAHDAVLASAKEGIGTREILEEIVKKIPPPEGDPAAPLKALLFDSWYDQYQGVIILARLIDGILKKGDKIQLVSTGRSYEALKVGVFAPVMREVPQLSAGEVGFVIAGIKDVADAKIGDTVTHTLKPCTTPLGGFKEVKPMVFSGLYPIDTSQYEQLRDALAKLKLNDSSFSYEPETSLALGFGFRCGFLGLLHMEIIQERLEREFNLDLITTAPTVVYRVHRIKGDMISIESANQLPPTQEIDYVEEPFILASIHTPNEFVGGILALCEEKRGVQREIKYLTPTRVMIIYELPLNEVVLDFYDRLKSITKGYASLDYEHLDYRRSELVRMNIMINGEVVDALSLIIHRDKAYYRGRDLVSKMKELIPRQMFEVAIQAAIGAKVIARETVKALRKDVLAKCYGGDITRKRKLLEKQKEGKKRMKNVGNVELPQEAFLAILKVEE.

In terms of domain architecture, tr-type G spans 4-186 (ENIRNFSIIA…EIVKKIPPPE (183 aa)). GTP contacts are provided by residues 16-21 (DHGKST) and 133-136 (NKID).

This sequence belongs to the TRAFAC class translation factor GTPase superfamily. Classic translation factor GTPase family. LepA subfamily.

It localises to the cell inner membrane. The catalysed reaction is GTP + H2O = GDP + phosphate + H(+). Functionally, required for accurate and efficient protein synthesis under certain stress conditions. May act as a fidelity factor of the translation reaction, by catalyzing a one-codon backward translocation of tRNAs on improperly translocated ribosomes. Back-translocation proceeds from a post-translocation (POST) complex to a pre-translocation (PRE) complex, thus giving elongation factor G a second chance to translocate the tRNAs correctly. Binds to ribosomes in a GTP-dependent manner. This chain is Elongation factor 4, found in Geobacter metallireducens (strain ATCC 53774 / DSM 7210 / GS-15).